A 157-amino-acid chain; its full sequence is Mediator of RNA polymerase II transcription subunit 22 (157 aa).

Belongs to the Mediator complex subunit 22 family. Component of the Mediator complex.

It is found in the nucleus. Functionally, component of the Mediator complex, a coactivator involved in the regulated transcription of nearly all RNA polymerase II-dependent genes. Mediator functions as a bridge to convey information from gene-specific regulatory proteins to the basal RNA polymerase II transcription machinery. Mediator is recruited to promoters by direct interactions with regulatory proteins and serves as a scaffold for the assembly of a functional preinitiation complex with RNA polymerase II and the general transcription factors. The protein is Mediator of RNA polymerase II transcription subunit 22 (mdt-22) of Caenorhabditis elegans.